A 290-amino-acid polypeptide reads, in one-letter code: Small ribosomal subunit protein uS11 (290 aa).

A disordered region spans residues 243 to 271 (DWEAAPAGFPATGEWSDAAPGAAAPNWDA). Residues 257–271 (WSDAAPGAAAPNWDA) show a composition bias toward low complexity.

The protein belongs to the universal ribosomal protein uS2 family. As to quaternary structure, component of the small ribosomal subunit (SSU). Mature N.crassa ribosomes consist of a small (40S) and a large (60S) subunit. The 40S small subunit contains 1 molecule of ribosomal RNA (18S rRNA) and at least 32 different proteins. The large 60S subunit contains 3 rRNA molecules (26S, 5.8S and 5S rRNA) and at least 42 different proteins. Interacts with rps21.

It is found in the cytoplasm. Its function is as follows. Component of the ribosome, a large ribonucleoprotein complex responsible for the synthesis of proteins in the cell. The small ribosomal subunit (SSU) binds messenger RNAs (mRNAs) and translates the encoded message by selecting cognate aminoacyl-transfer RNA (tRNA) molecules. The large subunit (LSU) contains the ribosomal catalytic site termed the peptidyl transferase center (PTC), which catalyzes the formation of peptide bonds, thereby polymerizing the amino acids delivered by tRNAs into a polypeptide chain. The nascent polypeptides leave the ribosome through a tunnel in the LSU and interact with protein factors that function in enzymatic processing, targeting, and the membrane insertion of nascent chains at the exit of the ribosomal tunnel. uS2 is required for the assembly and/or stability of the 40S ribosomal subunit. Required for the processing of the 20S rRNA-precursor to mature 18S rRNA in a late step of the maturation of 40S ribosomal subunits. The sequence is that of Small ribosomal subunit protein uS11 from Neurospora crassa (strain ATCC 24698 / 74-OR23-1A / CBS 708.71 / DSM 1257 / FGSC 987).